The chain runs to 575 residues: Probable methionine--tRNA ligase, mitochondrial (575 aa).

The 'HIGH' region signature appears at 52-62; that stretch reads FYVNGPPHIGH. The 'KMSKS' region motif lies at 352–356; that stretch reads KMSKS. Lysine 355 serves as a coordination point for ATP.

The protein belongs to the class-I aminoacyl-tRNA synthetase family.

It is found in the mitochondrion matrix. The catalysed reaction is tRNA(Met) + L-methionine + ATP = L-methionyl-tRNA(Met) + AMP + diphosphate. This is Probable methionine--tRNA ligase, mitochondrial (mmetS) from Dictyostelium discoideum (Social amoeba).